We begin with the raw amino-acid sequence, 420 residues long: COP9 signalosome complex subunit 11 (420 aa).

One can recognise a PCI domain in the interval 177-346 (SIHEHPSLVD…VYYKEDLPVG (170 aa)). Residues 386-420 (VEPLNRSQDMDAFELHEQSEDEEYEEEHLEEGENV) form a disordered region. The segment covering 404–420 (SEDEEYEEEHLEEGENV) has biased composition (acidic residues).

In terms of assembly, component of a COP9 signalosome-like (CSN) complex.

The protein localises to the cytoplasm. It localises to the nucleus. In terms of biological role, component of the COP9 signalosome (CSN) complex that acts as an regulator of the ubiquitin (Ubl) conjugation pathway by mediating the deneddylation of the cullin subunit of SCF-type E3 ubiquitin-protein ligase complexes The CSN complex is involved in the regulation of the mating pheromone response. PCI8 may also be involved in transcriptional and translational control. This Eremothecium gossypii (strain ATCC 10895 / CBS 109.51 / FGSC 9923 / NRRL Y-1056) (Yeast) protein is COP9 signalosome complex subunit 11 (PCI8).